The primary structure comprises 321 residues: Epiphycan (321 aa).

The signal sequence occupies residues Met-1–Thr-19. The O-linked (GalNAc...) threonine glycan is linked to Thr-60. Ser-64 carries an O-linked (Xyl...) (dermatan sulfate) serine glycan. The tract at residues Ser-64–Pro-100 is disordered. Acidic residues predominate over residues Glu-77–Glu-86. Residue Ser-95 is glycosylated (O-linked (GalNAc...) serine). Positions Val-105–Lys-142 constitute an LRRNT domain. Cys-117 and Cys-129 are oxidised to a cystine. LRR repeat units lie at residues Asn-143–Ser-164, Asp-167–Lys-188, Gln-191–Leu-212, Asp-237–Glu-257, and Asn-258–Asn-279. Cys-278 and Cys-311 are disulfide-bonded. Asn-282 is a glycosylation site (N-linked (GlcNAc...) asparagine). The stretch at Ala-289–Tyr-309 is one LRR 6 repeat.

It belongs to the small leucine-rich proteoglycan (SLRP) family. SLRP class III subfamily. A long and a short form present in approximately equimolar amounts may arise by proteolysis or cleavage by exopeptidases. Post-translationally, the O-linked polysaccharides on Thr-60 and Ser-95 are probably the mucin type linked to GalNAc. There is one glycosaminoglycan chain, known to be dermatan sulfate, and it is probably the O-glycosylation at Ser-64. Preferentially expressed in the zone of flattened chondrocytes of the developing limb cartilage.

It localises to the secreted. Its subcellular location is the extracellular space. The protein localises to the extracellular matrix. Functionally, may have a role in bone formation and also in establishing the ordered structure of cartilage through matrix organization. This is Epiphycan (EPYC) from Bos taurus (Bovine).